Reading from the N-terminus, the 254-residue chain is Zinc import ATP-binding protein ZnuC (254 aa).

Residues 5 to 219 (VELKEVCLSF…PEFARLFGRP (215 aa)) form the ABC transporter domain. 37 to 44 (GPNGAGKS) provides a ligand contact to ATP. Over residues 233–242 (CDGEHHHHEP) the composition is skewed to basic and acidic residues. Positions 233-254 (CDGEHHHHEPQVPVIRLPSRNQ) are disordered.

This sequence belongs to the ABC transporter superfamily. Zinc importer (TC 3.A.1.15.5) family. As to quaternary structure, the complex is composed of two ATP-binding proteins (ZnuC), two transmembrane proteins (ZnuB) and a solute-binding protein (ZnuA).

It is found in the cell inner membrane. It carries out the reaction Zn(2+)(out) + ATP(in) + H2O(in) = Zn(2+)(in) + ADP(in) + phosphate(in) + H(+)(in). Functionally, part of the ABC transporter complex ZnuABC involved in zinc import. Responsible for energy coupling to the transport system. The sequence is that of Zinc import ATP-binding protein ZnuC from Aeromonas hydrophila subsp. hydrophila (strain ATCC 7966 / DSM 30187 / BCRC 13018 / CCUG 14551 / JCM 1027 / KCTC 2358 / NCIMB 9240 / NCTC 8049).